Reading from the N-terminus, the 233-residue chain is RNA-free ribonuclease P (233 aa).

Belongs to the HARP family.

It carries out the reaction Endonucleolytic cleavage of RNA, removing 5'-extranucleotides from tRNA precursor.. Functionally, RNA-free RNase P that catalyzes the removal of the 5'-leader sequence from pre-tRNA to produce the mature 5'-terminus. This Methanocaldococcus jannaschii (strain ATCC 43067 / DSM 2661 / JAL-1 / JCM 10045 / NBRC 100440) (Methanococcus jannaschii) protein is RNA-free ribonuclease P.